Reading from the N-terminus, the 384-residue chain is S-adenosylmethionine synthase (384 aa).

Position 15 (His15) interacts with ATP. Residue Asp17 participates in Mg(2+) binding. Position 43 (Glu43) interacts with K(+). The L-methionine site is built by Glu56 and Gln99. The tract at residues 99 to 109 is flexible loop; the sequence is QSSDINQGVDR. ATP contacts are provided by residues 164–166, 230–231, Asp239, 245–246, Ala262, and Lys266; these read DAK, RF, and RK. An L-methionine-binding site is contributed by Asp239. Position 270 (Lys270) interacts with L-methionine.

It belongs to the AdoMet synthase family. In terms of assembly, homotetramer; dimer of dimers. Requires Mg(2+) as cofactor. It depends on K(+) as a cofactor.

The protein resides in the cytoplasm. The catalysed reaction is L-methionine + ATP + H2O = S-adenosyl-L-methionine + phosphate + diphosphate. The protein operates within amino-acid biosynthesis; S-adenosyl-L-methionine biosynthesis; S-adenosyl-L-methionine from L-methionine: step 1/1. Its function is as follows. Catalyzes the formation of S-adenosylmethionine (AdoMet) from methionine and ATP. The overall synthetic reaction is composed of two sequential steps, AdoMet formation and the subsequent tripolyphosphate hydrolysis which occurs prior to release of AdoMet from the enzyme. The protein is S-adenosylmethionine synthase of Pasteurella multocida (strain Pm70).